The chain runs to 320 residues: Cytochrome f (320 aa).

The N-terminal stretch at M1–A35 is a signal peptide. Heme-binding residues include Y36, C56, C59, and H60. Residues V286–K306 form a helical membrane-spanning segment.

Belongs to the cytochrome f family. As to quaternary structure, the 4 large subunits of the cytochrome b6-f complex are cytochrome b6, subunit IV (17 kDa polypeptide, petD), cytochrome f and the Rieske protein, while the 4 small subunits are PetG, PetL, PetM and PetN. The complex functions as a dimer. Requires heme as cofactor.

It localises to the plastid. The protein localises to the chloroplast thylakoid membrane. Functionally, component of the cytochrome b6-f complex, which mediates electron transfer between photosystem II (PSII) and photosystem I (PSI), cyclic electron flow around PSI, and state transitions. In Citrus sinensis (Sweet orange), this protein is Cytochrome f.